A 566-amino-acid chain; its full sequence is NAD-dependent malic enzyme (566 aa).

The active-site Proton donor is tyrosine 104. Position 157 (arginine 157) interacts with NAD(+). Lysine 175 functions as the Proton acceptor in the catalytic mechanism. Residues glutamate 246, aspartate 247, and aspartate 270 each contribute to the a divalent metal cation site. Residues aspartate 270 and asparagine 419 each coordinate NAD(+).

The protein belongs to the malic enzymes family. In terms of assembly, homotetramer. Mg(2+) is required as a cofactor. Requires Mn(2+) as cofactor.

It carries out the reaction (S)-malate + NAD(+) = pyruvate + CO2 + NADH. The catalysed reaction is oxaloacetate + H(+) = pyruvate + CO2. This Cronobacter sakazakii (strain ATCC BAA-894) (Enterobacter sakazakii) protein is NAD-dependent malic enzyme.